The primary structure comprises 198 residues: Alkyl hydroperoxide reductase C (198 aa).

The 162-residue stretch at threonine 2 to phenylalanine 163 folds into the Thioredoxin domain. The active-site Cysteine sulfenic acid (-SOH) intermediate is the cysteine 50.

The protein belongs to the peroxiredoxin family. AhpC/Prx1 subfamily. Homodimer; disulfide-linked, upon oxidation. 5 homodimers assemble to form a ring-like decamer.

The protein localises to the cytoplasm. The catalysed reaction is a hydroperoxide + NADH + H(+) = an alcohol + NAD(+) + H2O. Thiol-specific peroxidase that catalyzes the reduction of hydrogen peroxide and organic hydroperoxides to water and alcohols, respectively. Plays a role in cell protection against oxidative stress by detoxifying peroxides. The protein is Alkyl hydroperoxide reductase C of Buchnera aphidicola subsp. Schizaphis graminum (strain Sg).